A 101-amino-acid chain; its full sequence is MRTIVLFSTLMILVLSCMSNATVKSYSEEKTHSFDLTANPPIDLNIVDELPRDEHLGVSHADNVIGFCQECAHHCLQRKRVLGECRWFTCHCSRITIGVGL.

The first 21 residues, 1–21, serve as a signal peptide directing secretion; sequence MRTIVLFSTLMILVLSCMSNA. Cystine bridges form between C68–C85, C71–C90, and C75–C92.

This sequence belongs to the DEFL family.

The protein resides in the secreted. This Arabidopsis thaliana (Mouse-ear cress) protein is Defensin-like protein 222.